Here is a 213-residue protein sequence, read N- to C-terminus: Putative transmembrane protein DDB_G0267860 (213 aa).

An N-terminal signal peptide occupies residues 1 to 22 (MKTKILLLNFIIIFFLINVNLA). The Extracellular segment spans residues 23–191 (IKKDSPFKEI…SSKFDSSTSS (169 aa)). Asparagine 92 and asparagine 114 each carry an N-linked (GlcNAc...) asparagine glycan. A helical transmembrane segment spans residues 192-212 (ISINTLAILSLLFLIFINKLI). Residue asparagine 213 is a topological domain, cytoplasmic.

It is found in the membrane. In Dictyostelium discoideum (Social amoeba), this protein is Putative transmembrane protein DDB_G0267860.